The primary structure comprises 158 residues: Cytochrome c2 (158 aa).

The residue at position 1 (glutamine 1) is a Pyrrolidone carboxylic acid. Heme c-binding residues include cysteine 18, cysteine 21, histidine 22, and methionine 102. Residues 129 to 158 (AEAAPAADAAAPAAADAAAPAEPAAEGAAT) form a disordered region.

The protein belongs to the cytochrome c family. In terms of processing, binds 1 heme c group covalently per subunit.

The protein resides in the periplasm. Functionally, cytochrome c2 is found mainly in purple, non-sulfur, photosynthetic bacteria where it functions as the electron donor to the oxidized bacteriochlorophyll in the photophosphorylation pathway. However, it may also have a role in the respiratory chain and is found in some non-photosynthetic bacteria. The chain is Cytochrome c2 from Fuscovulum blasticum (Rhodobacter blasticus).